The primary structure comprises 214 residues: Glutathione S-transferase F11 (214 aa).

The GST N-terminal domain occupies 2–82; the sequence is VVKVYGQIKA…YYATKYADQG (81 aa). Residues 11–12, 40–41, 53–54, and 66–67 contribute to the glutathione site; these read AA, QK, QV, and ES. In terms of domain architecture, GST C-terminal spans 89–214; sequence TLEGRAIVDQ…WKKLMELAAY (126 aa).

It belongs to the GST superfamily. Phi family.

The protein localises to the cytoplasm. Its subcellular location is the cytosol. It catalyses the reaction RX + glutathione = an S-substituted glutathione + a halide anion + H(+). In terms of biological role, may be involved in the conjugation of reduced glutathione to a wide number of exogenous and endogenous hydrophobic electrophiles and have a detoxification role against certain herbicides. The protein is Glutathione S-transferase F11 of Arabidopsis thaliana (Mouse-ear cress).